Reading from the N-terminus, the 296-residue chain is Aquaporin NIP1-1 (296 aa).

Met1 bears the N-acetylmethionine mark. Helical transmembrane passes span 57–77 (LIAE…SVVV) and 84–104 (VVTL…LIYS). The short motif at 114–116 (NPA) is the NPA 1 element. The next 3 membrane-spanning stretches (helical) occupy residues 136 to 156 (VISQ…LFGL), 180 to 200 (AFTM…GVAT), and 205 to 225 (IGEL…LIAA). The NPA 2 motif lies at 233–235 (NPG). The chain crosses the membrane as a helical span at residues 249–269 (GIWIYLVAPTLGAIAGAWVYN). Ser286 bears the Phosphoserine mark.

This sequence belongs to the MIP/aquaporin (TC 1.A.8) family. NIP (TC 1.A.8.12) subfamily. In terms of tissue distribution, expressed in roots.

The protein localises to the membrane. In terms of biological role, water channel probably required to promote glycerol permeability and water transport across cell membranes. This Arabidopsis thaliana (Mouse-ear cress) protein is Aquaporin NIP1-1 (NIP1-1).